Reading from the N-terminus, the 154-residue chain is Prefoldin subunit alpha (154 aa).

Belongs to the prefoldin alpha subunit family. As to quaternary structure, heterohexamer of two alpha and four beta subunits.

The protein localises to the cytoplasm. Its function is as follows. Molecular chaperone capable of stabilizing a range of proteins. Seems to fulfill an ATP-independent, HSP70-like function in archaeal de novo protein folding. The polypeptide is Prefoldin subunit alpha (Hyperthermus butylicus (strain DSM 5456 / JCM 9403 / PLM1-5)).